The primary structure comprises 169 residues: NAD(P)H-quinone oxidoreductase subunit J, chloroplastic (169 aa).

Belongs to the complex I 30 kDa subunit family. As to quaternary structure, NDH is composed of at least 16 different subunits, 5 of which are encoded in the nucleus.

Its subcellular location is the plastid. It localises to the chloroplast thylakoid membrane. The catalysed reaction is a plastoquinone + NADH + (n+1) H(+)(in) = a plastoquinol + NAD(+) + n H(+)(out). The enzyme catalyses a plastoquinone + NADPH + (n+1) H(+)(in) = a plastoquinol + NADP(+) + n H(+)(out). Functionally, NDH shuttles electrons from NAD(P)H:plastoquinone, via FMN and iron-sulfur (Fe-S) centers, to quinones in the photosynthetic chain and possibly in a chloroplast respiratory chain. The immediate electron acceptor for the enzyme in this species is believed to be plastoquinone. Couples the redox reaction to proton translocation, and thus conserves the redox energy in a proton gradient. The sequence is that of NAD(P)H-quinone oxidoreductase subunit J, chloroplastic from Physcomitrium patens (Spreading-leaved earth moss).